Consider the following 969-residue polypeptide: Aspartic protease 5 (969 aa).

The N-terminal stretch at 1-22 (MEAGAMGGSSFLSFSSGPSAET) is a signal peptide. Low complexity predominate over residues 1-45 (MEAGAMGGSSFLSFSSGPSAETSPSSLSPPTSSSPSPSPQLVSDS). 5 disordered regions span residues 1-65 (MEAG…SSRT), 79-104 (ENEA…AGHL), 128-149 (SSAT…RSSS), 173-193 (SSSS…SACG), and 311-382 (FLSL…DLPR). The Lumenal segment spans residues 23–820 (SPSSLSPPTS…PEGLPLSPQQ (798 aa)). The segment covering 311–324 (FLSLSSSPRSLASD) has biased composition (low complexity). Basic and acidic residues predominate over residues 335-355 (QSREQRGEREGERQRPDKGEE). A Peptidase A1 domain is found at 413 to 758 (YFLDILVGTP…DREQDRVGFA (346 aa)). Aspartate 431 is an active-site residue. The interval 608-635 (PPESESTPATEALRPVAGESASRRISEK) is disordered. Residue aspartate 682 is part of the active site. Residues 768 to 794 (DQRPRGPDSGDGPKGRPTAPFTVPPLR) are disordered. Residues 769–781 (QRPRGPDSGDGPK) are compositionally biased toward basic and acidic residues. The helical transmembrane segment at 821–841 (LWVAAALVVVAILIAVTVILL) threads the bilayer. Over 842-969 (HTIKRPSRSS…TLLDLPLGGE (128 aa)) the chain is Cytoplasmic. A disordered region spans residues 922 to 969 (EDDGDFFGDDSVPSAEEQETAPSLSLREESSPFSASQSTLLDLPLGGE). Polar residues predominate over residues 952-961 (SPFSASQSTL).

It belongs to the peptidase A1 family. In terms of processing, may be auto-cleaved to produce a 55 kDa form.

The protein localises to the golgi apparatus membrane. Its function is as follows. In tachyzoites, plays an essential role in the export of several dense granule proteins into the host cell by cleaving the localization motif RRLxx (termed Toxoplasma export element (TEXEL)) located downstream of the N-terminal secretory signal sequence. However, can also regulate the export of proteins that lack the TEXEL motif, such as GRA24. Requires Arg at P3 and P2, and Leu at P1 in the substrate TEXEL motif and, specifically, cleaves after Leu. Cleaves GRA16; proteolytic cleavage is essential for the correct trafficking of GRA16 from the parasite into the infected host nucleus. Cleaves GRA19 and GRA20. Cleaves MYR1. Cleaves LCAT, GRA44, GRA46, GRA46, ROP35/WNG1 and ROP34/WNG2. By regulating the export of dense granule proteins into the host cell, regulates multiple processes during tachyzoite infection of host cells, including recruitment of host mitochondria to the parasitophorous vacuole (PV), formation of the nanotubular network (NTN) or intravacuolar network (IVN) which are membranous tubules that bud from the PV membrane into the vacuolar lumen and, up-regulation of host cell genes to facilitate the parasite infection and modulate the host innate immune response. At the bradyzoite stage, also involved in the formation of the cyst wall. The chain is Aspartic protease 5 from Toxoplasma gondii.